Reading from the N-terminus, the 352-residue chain is uncharacterized protein (352 aa).

The stretch at 285 to 352 (FQHLRNARER…IKSEIRRLQR (68 aa)) forms a coiled coil.

This is an uncharacterized protein from Emericella nidulans (strain FGSC A4 / ATCC 38163 / CBS 112.46 / NRRL 194 / M139) (Aspergillus nidulans).